We begin with the raw amino-acid sequence, 92 residues long: UPF0213 protein H16_B0156 (92 aa).

Residues 5–80 (SAWYLYLLEC…KRLSSTQKRA (76 aa)) enclose the GIY-YIG domain.

This sequence belongs to the UPF0213 family.

The sequence is that of UPF0213 protein H16_B0156 from Cupriavidus necator (strain ATCC 17699 / DSM 428 / KCTC 22496 / NCIMB 10442 / H16 / Stanier 337) (Ralstonia eutropha).